Here is a 500-residue protein sequence, read N- to C-terminus: MEFIAKKADIATLSTQCVVVFCKDGKLMASASHLDTEQHGLLTHQLSIKAISPTAGSHLWLTLAPTKSAKHSKALLVQLGESKKKSADITIEDIRKISQKLASTLNSAKLKDAAVFFDSALPASGDCTLEKLAHTLALEIERASYRFSLKAGTKNTPATLKKVVFVATNSAETKTLRNGANTGSAMGKGINAARELGNLPGNICTPNYLAEQAKQLAAGCKKLTSKALGEKQMERLGMGAFLSVSKGSDQEGKLILLEYKGAAANKAPHVLVGKGVTFDTGGISLKPGANMDEMKFDMCGAASVLGTFKALVELDAKVNVVGIIAAAENMPSGGASKPGDVVTSMSGQTIEILNTDAEGRLVLCDALTYAERYKPKSVVDIATLTGACVVALGNHAAGLYSNTQSVADALLKAGEETHDRAWQMPLWDDYQRQLDSNFADMGNIGGMPGGSITAACFLSRYTKKYPWAHLDIAGVAWHSGAKKGATGRPVSLLVNYLLNN.

2 residues coordinate Mn(2+): K274 and D279. Residue K286 is part of the active site. Mn(2+) is bound by residues D297, D356, and E358. R360 is an active-site residue.

It belongs to the peptidase M17 family. Mn(2+) is required as a cofactor.

Its subcellular location is the cytoplasm. The enzyme catalyses Release of an N-terminal amino acid, Xaa-|-Yaa-, in which Xaa is preferably Leu, but may be other amino acids including Pro although not Arg or Lys, and Yaa may be Pro. Amino acid amides and methyl esters are also readily hydrolyzed, but rates on arylamides are exceedingly low.. It catalyses the reaction Release of an N-terminal amino acid, preferentially leucine, but not glutamic or aspartic acids.. In terms of biological role, presumably involved in the processing and regular turnover of intracellular proteins. Catalyzes the removal of unsubstituted N-terminal amino acids from various peptides. The polypeptide is Probable cytosol aminopeptidase (Saccharophagus degradans (strain 2-40 / ATCC 43961 / DSM 17024)).